We begin with the raw amino-acid sequence, 408 residues long: UDP-N-acetylglucosamine--dolichyl-phosphate N-acetylglucosaminephosphotransferase (408 aa).

2 helical membrane passes run 6 to 26 (SLLGFIGICCLPPILLLIYLP) and 32 to 52 (WIIVQSGFFSFGAGLLTYKLI). UDP-N-acetyl-alpha-D-glucosamine is bound by residues Asp68 and Glu84. The next 2 helical transmembrane spans lie at 87–107 (GICVAVVYLVCVILFQTFQWF) and 120–140 (AALTSICFMILLGFGDDVLNL). Lys145 serves as a coordination point for dolichyl phosphate. 2 helical membrane-spanning segments follow: residues 147–167 (ILPMFASLPLLVAYAGGTTVV) and 181–201 (LGVVFDLGIFYRIYLLMLAIF). 200–208 (IFCTNSINI) provides a ligand contact to dolichyl phosphate. Position 207 (Asn207) interacts with Mg(2+). Residue Asn213 participates in UDP-N-acetyl-alpha-D-glucosamine binding. 2 consecutive transmembrane segments (helical) span residues 221–241 (VVIATSIIIHNLIELTIASSV) and 258–278 (HLFSLILMIPFLFTTISLLFY). Asp289 contributes to the Mg(2+) binding site. A helical membrane pass occupies residues 297 to 317 (MCFAVVAILCHFSKTLLLFFI). Residue 338–340 (RHR) coordinates UDP-N-acetyl-alpha-D-glucosamine. The next 2 helical transmembrane spans lie at 351-371 (MEAIPTNLTIINLLLMITGPL) and 376-396 (LCVYLLIFQGLCSCVGFGIRY).

This sequence belongs to the glycosyltransferase 4 family. As to quaternary structure, homodimer. Requires Mg(2+) as cofactor.

The protein localises to the endoplasmic reticulum membrane. The catalysed reaction is a di-trans,poly-cis-dolichyl phosphate + UDP-N-acetyl-alpha-D-glucosamine = an N-acetyl-alpha-D-glucosaminyl-diphospho-di-trans,poly-cis-dolichol + UMP. It participates in protein modification; protein glycosylation. Its activity is regulated as follows. Inhibited by natural nucleoside antibiotic tunicamycin, which acts as a structural analog and competitor of UDP-GlcNAc. Its function is as follows. UDP-N-acetylglucosamine--dolichyl-phosphate N-acetylglucosaminephosphotransferase that operates in the biosynthetic pathway of dolichol-linked oligosaccharides, the glycan precursors employed in protein asparagine (N)-glycosylation. The assembly of dolichol-linked oligosaccharides begins on the cytosolic side of the endoplasmic reticulum membrane and finishes in its lumen. The sequential addition of sugars to dolichol pyrophosphate produces dolichol-linked oligosaccharides containing fourteen sugars, including two GlcNAcs, nine mannoses and three glucoses. Once assembled, the oligosaccharide is transferred from the lipid to nascent proteins by oligosaccharyltransferases. Catalyzes the initial step of dolichol-linked oligosaccharide biosynthesis, transfering GlcNAc-1-P from cytosolic UDP-GlcNAc onto the carrier lipid dolichyl phosphate (P-dolichol), yielding GlcNAc-P-P-dolichol embedded in the cytoplasmic leaflet of the endoplasmic reticulum membrane. The chain is UDP-N-acetylglucosamine--dolichyl-phosphate N-acetylglucosaminephosphotransferase (alg7) from Dictyostelium discoideum (Social amoeba).